A 228-amino-acid chain; its full sequence is UPF0758 protein STER_1430 (228 aa).

The MPN domain occupies 103 to 225 (QIMSSQQVAR…YYSFREERED (123 aa)). Zn(2+) contacts are provided by His-174, His-176, and Asp-187. The short motif at 174–187 (HNHPSGEAYPSRND) is the JAMM motif element.

It belongs to the UPF0758 family.

The polypeptide is UPF0758 protein STER_1430 (Streptococcus thermophilus (strain ATCC BAA-491 / LMD-9)).